A 213-amino-acid polypeptide reads, in one-letter code: ATP-dependent Clp protease proteolytic subunit (213 aa).

S114 acts as the Nucleophile in catalysis. Residue H139 is part of the active site.

Belongs to the peptidase S14 family. Fourteen ClpP subunits assemble into 2 heptameric rings which stack back to back to give a disk-like structure with a central cavity, resembling the structure of eukaryotic proteasomes.

Its subcellular location is the cytoplasm. The enzyme catalyses Hydrolysis of proteins to small peptides in the presence of ATP and magnesium. alpha-casein is the usual test substrate. In the absence of ATP, only oligopeptides shorter than five residues are hydrolyzed (such as succinyl-Leu-Tyr-|-NHMec, and Leu-Tyr-Leu-|-Tyr-Trp, in which cleavage of the -Tyr-|-Leu- and -Tyr-|-Trp bonds also occurs).. Functionally, cleaves peptides in various proteins in a process that requires ATP hydrolysis. Has a chymotrypsin-like activity. Plays a major role in the degradation of misfolded proteins. The chain is ATP-dependent Clp protease proteolytic subunit from Pseudomonas putida (strain ATCC 47054 / DSM 6125 / CFBP 8728 / NCIMB 11950 / KT2440).